A 136-amino-acid chain; its full sequence is uncharacterized protein (136 aa).

The signal sequence occupies residues 1-35 (MTHRAVPCQPRAFSKIKVLVISFLFLMVAFLPFSS).

This is an uncharacterized protein from Saccharomyces cerevisiae (strain ATCC 204508 / S288c) (Baker's yeast).